Reading from the N-terminus, the 184-residue chain is Peptidyl-tRNA hydrolase (184 aa).

Residue Tyr14 participates in tRNA binding. The Proton acceptor role is filled by His19. Positions 64, 66, and 112 each coordinate tRNA.

The protein belongs to the PTH family. In terms of assembly, monomer.

The protein resides in the cytoplasm. It carries out the reaction an N-acyl-L-alpha-aminoacyl-tRNA + H2O = an N-acyl-L-amino acid + a tRNA + H(+). Hydrolyzes ribosome-free peptidyl-tRNAs (with 1 or more amino acids incorporated), which drop off the ribosome during protein synthesis, or as a result of ribosome stalling. In terms of biological role, catalyzes the release of premature peptidyl moieties from peptidyl-tRNA molecules trapped in stalled 50S ribosomal subunits, and thus maintains levels of free tRNAs and 50S ribosomes. The chain is Peptidyl-tRNA hydrolase from Listeria innocua serovar 6a (strain ATCC BAA-680 / CLIP 11262).